The following is a 121-amino-acid chain: Small ribosomal subunit protein uS13 (121 aa).

The tract at residues 91–121 is disordered; the sequence is HRKGLPVRGQRTRTNARTRKGKKKTVAGKKK.

This sequence belongs to the universal ribosomal protein uS13 family. In terms of assembly, part of the 30S ribosomal subunit. Forms a loose heterodimer with protein S19. Forms two bridges to the 50S subunit in the 70S ribosome.

Its function is as follows. Located at the top of the head of the 30S subunit, it contacts several helices of the 16S rRNA. In the 70S ribosome it contacts the 23S rRNA (bridge B1a) and protein L5 of the 50S subunit (bridge B1b), connecting the 2 subunits; these bridges are implicated in subunit movement. Contacts the tRNAs in the A and P-sites. This is Small ribosomal subunit protein uS13 from Treponema denticola (strain ATCC 35405 / DSM 14222 / CIP 103919 / JCM 8153 / KCTC 15104).